The following is a 127-amino-acid chain: Large ribosomal subunit protein bL12 (127 aa).

It belongs to the bacterial ribosomal protein bL12 family. As to quaternary structure, homodimer. Part of the ribosomal stalk of the 50S ribosomal subunit. Forms a multimeric L10(L12)X complex, where L10 forms an elongated spine to which 2 to 4 L12 dimers bind in a sequential fashion. Binds GTP-bound translation factors.

Functionally, forms part of the ribosomal stalk which helps the ribosome interact with GTP-bound translation factors. Is thus essential for accurate translation. This is Large ribosomal subunit protein bL12 from Chloroherpeton thalassium (strain ATCC 35110 / GB-78).